Here is a 30-residue protein sequence, read N- to C-terminus: Toxic protein AapA1 (30 aa).

It belongs to the AapA toxin family.

The protein localises to the cell inner membrane. With respect to regulation, transcription of the aapA1 gene generates a full-length transcript whose folding impedes translation. Processing of the 3' end of the aapA1 message generates a shorter transcript that becomes translatable after a structural rearrangement. The processing also makes it more susceptible to forming dsRNA with IsoA1 which leads to duplex RNA degradation by RNase 3 (rnc). Its function is as follows. May be involved in response to oxidative stress. Toxic component of a type I toxin-antitoxin (TA) system. When overexpression is induced in situ in the absence of its cognate antisense RNA antitoxin IsoA1 it leads to cell growth arrest and cell death without lysis. Neutralized by IsoA1 RNA which forms an extensive duplex with the mRNA. Binds artificial prokaryotic and eukaryotic lipid membranes, with 30-fold higher affinity for prokaryotic membranes. Molecular dynamics suggests the peptide penetrates the membrane leading to lipid reorganization and thinning of the bilayer. Induction of toxin in the absence of antitoxin RNA causes a fast conversion of cells from spiral-shaped to coccoid forms; cells have no visible membrane defects and resemble wild-type 'aging coccoids'. Toxin causes a moderate decrease in membrane potential and ATP content and alterations in peptidoglycan muropeptide abundance; GlcNAc-MurNAc dipeptides increase while GlcNAc-MurNAc tripeptides decrease (i.e. a faster phenocopy of cell aging). Deletion of all 6 AapA/IsoA TA loci in strain B128 leads to slower than wild-type conversion of H2O2-treated cells to the coccoid form. This suggests oxidative stress triggers coccoid transformation via these type I TA systems, although other factors eventually drive the morphology change. In Helicobacter pylori (strain ATCC 700392 / 26695) (Campylobacter pylori), this protein is Toxic protein AapA1.